Here is a 2293-residue protein sequence, read N- to C-terminus: Protein Ycf2 A (2293 aa).

An ATP-binding site is contributed by 1647–1654; it reads GSIGTGRS.

Belongs to the Ycf2 family.

Its subcellular location is the plastid. It is found in the chloroplast stroma. Functionally, probable ATPase of unknown function. Its presence in a non-photosynthetic plant (Epifagus virginiana) and experiments in tobacco indicate that it has an essential function which is probably not related to photosynthesis. This chain is Protein Ycf2 A, found in Crucihimalaya wallichii (Rock-cress).